The following is a 166-amino-acid chain: 2-C-methyl-D-erythritol 2,4-cyclodiphosphate synthase (166 aa).

Residues D15 and H17 each coordinate a divalent metal cation. 4-CDP-2-C-methyl-D-erythritol 2-phosphate contacts are provided by residues 15-17 and 43-44; these read DVH and HS. Residue H51 participates in a divalent metal cation binding. 4-CDP-2-C-methyl-D-erythritol 2-phosphate is bound by residues 65-67, 141-144, and R151; these read DIG and TTNE.

It belongs to the IspF family. As to quaternary structure, homotrimer. Requires a divalent metal cation as cofactor.

It carries out the reaction 4-CDP-2-C-methyl-D-erythritol 2-phosphate = 2-C-methyl-D-erythritol 2,4-cyclic diphosphate + CMP. Its pathway is isoprenoid biosynthesis; isopentenyl diphosphate biosynthesis via DXP pathway; isopentenyl diphosphate from 1-deoxy-D-xylulose 5-phosphate: step 4/6. Involved in the biosynthesis of isopentenyl diphosphate (IPP) and dimethylallyl diphosphate (DMAPP), two major building blocks of isoprenoid compounds. Catalyzes the conversion of 4-diphosphocytidyl-2-C-methyl-D-erythritol 2-phosphate (CDP-ME2P) to 2-C-methyl-D-erythritol 2,4-cyclodiphosphate (ME-CPP) with a corresponding release of cytidine 5-monophosphate (CMP). The sequence is that of 2-C-methyl-D-erythritol 2,4-cyclodiphosphate synthase from Synechococcus sp. (strain CC9311).